Consider the following 76-residue polypeptide: Large ribosomal subunit protein uL24 (76 aa).

Belongs to the universal ribosomal protein uL24 family. Part of the 50S ribosomal subunit.

Functionally, one of two assembly initiator proteins, it binds directly to the 5'-end of the 23S rRNA, where it nucleates assembly of the 50S subunit. One of the proteins that surrounds the polypeptide exit tunnel on the outside of the subunit. The protein is Large ribosomal subunit protein uL24 of Wolinella succinogenes (strain ATCC 29543 / DSM 1740 / CCUG 13145 / JCM 31913 / LMG 7466 / NCTC 11488 / FDC 602W) (Vibrio succinogenes).